The primary structure comprises 116 residues: Immunoglobulin heavy variable 3-66 (116 aa).

A signal peptide spans 1-19; the sequence is MEFGLSWVFLVAILKGVQC. Residues 20–44 form a framework-1 region; the sequence is EVQLVESGGGLIQPGGSLRLSCAAS. The Ig-like domain occupies 20-116; it reads EVQLVESGGG…EDTAVYYCAR (97 aa). A disulfide bridge connects residues C41 and C114. Residues 45–52 are complementarity-determining-1; sequence GFTVSSNY. Residues 53–69 form a framework-2 region; that stretch reads MSWVRQAPGKGLEWVSV. The segment at 70–76 is complementarity-determining-2; that stretch reads IYSCGST. Residues 77–114 are framework-3; it reads YYADSVKGRFTISRDNSKNTLYLQMNSLRAEDTAVYYC. The interval 115 to 116 is complementarity-determining-3; it reads AR.

In terms of assembly, immunoglobulins are composed of two identical heavy chains and two identical light chains; disulfide-linked.

It localises to the secreted. Its subcellular location is the cell membrane. Its function is as follows. V region of the variable domain of immunoglobulin heavy chains that participates in the antigen recognition. Immunoglobulins, also known as antibodies, are membrane-bound or secreted glycoproteins produced by B lymphocytes. In the recognition phase of humoral immunity, the membrane-bound immunoglobulins serve as receptors which, upon binding of a specific antigen, trigger the clonal expansion and differentiation of B lymphocytes into immunoglobulins-secreting plasma cells. Secreted immunoglobulins mediate the effector phase of humoral immunity, which results in the elimination of bound antigens. The antigen binding site is formed by the variable domain of one heavy chain, together with that of its associated light chain. Thus, each immunoglobulin has two antigen binding sites with remarkable affinity for a particular antigen. The variable domains are assembled by a process called V-(D)-J rearrangement and can then be subjected to somatic hypermutations which, after exposure to antigen and selection, allow affinity maturation for a particular antigen. The protein is Immunoglobulin heavy variable 3-66 of Homo sapiens (Human).